A 219-amino-acid chain; its full sequence is Small ribosomal subunit protein uS3 (219 aa).

In terms of domain architecture, KH type-2 spans 39–108; the sequence is IKEFIKKNYF…KVTVKVQEIK (70 aa).

Belongs to the universal ribosomal protein uS3 family. As to quaternary structure, part of the 30S ribosomal subunit. Forms a tight complex with proteins S10 and S14.

Its function is as follows. Binds the lower part of the 30S subunit head. Binds mRNA in the 70S ribosome, positioning it for translation. The protein is Small ribosomal subunit protein uS3 of Fusobacterium nucleatum subsp. nucleatum (strain ATCC 25586 / DSM 15643 / BCRC 10681 / CIP 101130 / JCM 8532 / KCTC 2640 / LMG 13131 / VPI 4355).